A 587-amino-acid chain; its full sequence is MVAAAMLLRSCPVLSQGPTGLLGKVAKTYQFLFSIGRCPILATQGPTCSQIHLKATKAGGDSPSWAKSHCPFMLSELQDRKSKIVQRAAPEVQEDVKTFKTDLLSTMDSTTRSHSFPSFQEPEQTEGAVPHLIQNNMTGSQAFGYDQFFRDKIMEKKQDHTYRVFKTVNRWANAYPFAQHFSEASMASKDVSVWCSNDYLGISRHPRVLQAIEETLKNHGAGAGGTRNISGTSKFHVELEQELAELHQKDSALLFSSCFVANDSTLFTLAKLLPGCEIYSDAGNHASMIQGIRNSGAAKFVFRHNDPGHLKKLLEKSDPKTPKIVAFETVHSMDGAICPLEELCDVAHQYGALTFVDEVHAVGLYGARGAGIGERDGIMHKLDIISGTLGKAFGCVGGYIASTRDLVDMVRSYAAGFIFTTSLPPMVLSGALESVRLLKGEEGQALRRAHQRNVKHMRQLLMDRGFPVIPCPSHIIPIRVGNAALNSKICDLLLSKHSIYVQAINYPTVPRGEELLRLAPSPHHSPQMMENFVEKLLLAWTEVGLPLQDVSVAACNFCHRPVHFELMSEWERSYFGNMGPQYVTTYA.

The transit peptide at 1–49 (MVAAAMLLRSCPVLSQGPTGLLGKVAKTYQFLFSIGRCPILATQGPTCS) directs the protein to the mitochondrion. Arginine 163 contacts succinyl-CoA. Residues cysteine 258 and phenylalanine 259 each coordinate pyridoxal 5'-phosphate. 2 residues coordinate succinyl-CoA: serine 280 and lysine 299. Pyridoxal 5'-phosphate-binding residues include serine 332, histidine 360, and threonine 388. Lysine 391 is a catalytic residue. Lysine 391 carries the N6-(pyridoxal phosphate)lysine modification. The pyridoxal 5'-phosphate site is built by threonine 420 and threonine 421. Residue threonine 508 participates in succinyl-CoA binding.

This sequence belongs to the class-II pyridoxal-phosphate-dependent aminotransferase family. Homodimer. Interacts with SUCLA2. Requires pyridoxal 5'-phosphate as cofactor. In terms of tissue distribution, predomnantly expressed in erythroid cells.

It localises to the mitochondrion inner membrane. The protein resides in the mitochondrion. It carries out the reaction succinyl-CoA + glycine + H(+) = 5-aminolevulinate + CO2 + CoA. The protein operates within porphyrin-containing compound metabolism; protoporphyrin-IX biosynthesis; 5-aminolevulinate from glycine: step 1/1. Its function is as follows. Catalyzes the pyridoxal 5'-phosphate (PLP)-dependent condensation of succinyl-CoA and glycine to form aminolevulinic acid (ALA), with CoA and CO2 as by-products. Contributes significantly to heme formation during erythropoiesis. The chain is 5-aminolevulinate synthase, erythroid-specific, mitochondrial (Alas2) from Mus musculus (Mouse).